An 88-amino-acid polypeptide reads, in one-letter code: Small ribosomal subunit protein uS17 (88 aa).

This sequence belongs to the universal ribosomal protein uS17 family. As to quaternary structure, part of the 30S ribosomal subunit.

Functionally, one of the primary rRNA binding proteins, it binds specifically to the 5'-end of 16S ribosomal RNA. In Stutzerimonas stutzeri (strain A1501) (Pseudomonas stutzeri), this protein is Small ribosomal subunit protein uS17.